The following is a 231-amino-acid chain: Large ribosomal subunit protein uL1 (231 aa).

Belongs to the universal ribosomal protein uL1 family. As to quaternary structure, part of the 50S ribosomal subunit.

Functionally, binds directly to 23S rRNA. The L1 stalk is quite mobile in the ribosome, and is involved in E site tRNA release. Its function is as follows. Protein L1 is also a translational repressor protein, it controls the translation of the L11 operon by binding to its mRNA. The polypeptide is Large ribosomal subunit protein uL1 (Beijerinckia indica subsp. indica (strain ATCC 9039 / DSM 1715 / NCIMB 8712)).